A 666-amino-acid chain; its full sequence is ATP-dependent RNA helicase DDX51 (666 aa).

At A2 the chain carries N-acetylalanine. The segment at 9–152 is disordered; the sequence is YPGPDAAAAA…AAPDGPALEE (144 aa). Over residues 10 to 28 the composition is skewed to low complexity; the sequence is PGPDAAAAAGPEGAEAGAH. Residues 33–48 show a composition bias toward basic and acidic residues; that stretch reads ALLERLQSRARERQQQ. A compositionally biased stretch (low complexity) spans 49-58; that stretch reads REPAQTEAAA. The span at 65-75 shows a compositional bias: basic residues; that stretch reads RRRRRPRRRRR. Residues S83 and S103 each carry the phosphoserine modification. Over residues 97 to 108 the composition is skewed to acidic residues; sequence EDAGAESNEEAP. The Q motif motif lies at 221 to 229; the sequence is YFPVQAAVI. Residues 243–452 form the Helicase ATP-binding domain; it reads GRGGYRPSDL…QLGLHQPRLF (210 aa). 256–263 lines the ATP pocket; it reads APTGSGKT. A DEAD box motif is present at residues 371-374; the sequence is DEAD. The region spanning 494 to 640 is the Helicase C-terminal domain; it reads VVLHLVLEMG…RHELSSKLLQ (147 aa).

This sequence belongs to the DEAD box helicase family. DDX51/DBP6 subfamily.

Its subcellular location is the nucleus. It is found in the nucleolus. It catalyses the reaction ATP + H2O = ADP + phosphate + H(+). Functionally, ATP-binding RNA helicase involved in the biogenesis of 60S ribosomal subunits. The sequence is that of ATP-dependent RNA helicase DDX51 (DDX51) from Homo sapiens (Human).